The following is a 598-amino-acid chain: NADH-quinone oxidoreductase subunit C/D (598 aa).

The NADH dehydrogenase I subunit C stretch occupies residues 1-189 (MTDLTTSDST…DPFVLTKQKE (189 aa)). The NADH dehydrogenase I subunit D stretch occupies residues 213 to 598 (DFMFLNLGPN…IDFVMSDVDR (386 aa)).

The protein in the N-terminal section; belongs to the complex I 30 kDa subunit family. It in the C-terminal section; belongs to the complex I 49 kDa subunit family. NDH-1 is composed of 13 different subunits. Subunits NuoB, CD, E, F, and G constitute the peripheral sector of the complex.

The protein localises to the cell inner membrane. The enzyme catalyses a quinone + NADH + 5 H(+)(in) = a quinol + NAD(+) + 4 H(+)(out). Functionally, NDH-1 shuttles electrons from NADH, via FMN and iron-sulfur (Fe-S) centers, to quinones in the respiratory chain. The immediate electron acceptor for the enzyme in this species is believed to be ubiquinone. Couples the redox reaction to proton translocation (for every two electrons transferred, four hydrogen ions are translocated across the cytoplasmic membrane), and thus conserves the redox energy in a proton gradient. The polypeptide is NADH-quinone oxidoreductase subunit C/D (Yersinia enterocolitica serotype O:8 / biotype 1B (strain NCTC 13174 / 8081)).